We begin with the raw amino-acid sequence, 212 residues long: Cytidylate kinase (212 aa).

Residue 7 to 15 coordinates ATP; it reads GPAASGKGT.

The protein belongs to the cytidylate kinase family. Type 1 subfamily.

The protein localises to the cytoplasm. It catalyses the reaction CMP + ATP = CDP + ADP. The catalysed reaction is dCMP + ATP = dCDP + ADP. The protein is Cytidylate kinase of Rhodopseudomonas palustris (strain BisB5).